The sequence spans 175 residues: MASSSISFSCAPSLATSLFSTTSSSPRLLSSRFLGTRNLKLRIRPARLGPSNGSRTTCWFKFGKNGVDAENAGIYGSQSRDDFDRDDVEQYFNYMGMLAVEGTYSKMEALLNLNIHPVDILLMLAATEGDRPKIEELLKAGADYSVKDADGRTAIDRANSEEIRDLILGYSTQKA.

A chloroplast-targeting transit peptide spans 1–68 (MASSSISFSC…WFKFGKNGVD (68 aa)). One copy of the ANK repeat lies at 117–149 (PVDILLMLAATEGDRPKIEELLKAGADYSVKDA).

As to quaternary structure, interacts with CAO/cpSRP43, but is not a component of the transit complex. Interacts with LHCP (via T14 domain), TIC40 and TIC110. In terms of tissue distribution, highly expressed in leaves and seedlings. Detected in roots, but not in germinating seeds.

It localises to the plastid. Its subcellular location is the chloroplast thylakoid membrane. The protein localises to the chloroplast envelope. It is found in the chloroplast stroma. Its function is as follows. Involved in the import of light-harvesting complex proteins (LHCP) and subsequent routing of these proteins to the chloroplast signal recognition particle (SRP) pathway. The chain is Protein LHCP TRANSLOCATION DEFECT (LTD) from Arabidopsis thaliana (Mouse-ear cress).